Here is a 751-residue protein sequence, read N- to C-terminus: MSTPHHQFESKSSTAIRRRLSSSVSSKQRPNIMTTTFASLTPMWAGVAGTLVNNNTQYEIAVTVHDGVYSTDFASVIIPVTPGDTVKNSKDIEAQVLNLIRKFSAEHLCKFLGAGITLALLKECPNLCTRLWLDMDIVPIVFNIKPFHTDSVTRPNIKHRISSTTGSYVPSGSETPTVYVEASHLGDPSHLSPNAAQKLPIPRTLDEQSDSAARKCLMYFGPNNNPRLSIGARNPVTVDAGGKIHLIDDLEEYRMTVGAGTWNAVIKLADELREKKVKIGFFSSTPQGGGVALMRHALIRFLTALDVDVAWYVPNPSPQVFRTTKNNHNILQGVAAPDLRLTQEAKDAFDAWILKNGLRWTAEGGPLAPGGVDVVFIDDPQMPGLIPLIKKVRPEVPIVYRSHIEIRNDLVHVAWSPQEEVWKYLWNNIQLADLFISHPVSKFVPSDVPTEKLALLGAATDWLDGLNKDLDPWDSPFYMGEFRPRGSHLNRGEFRSLCAKEKMHELNWPARDYIVQVARFDPSKGIPNVVDSYYKFRNLLRTRSPDMDESEHPQLLICGHGAVDDPDASIIYDQIMALVNSDPYKEYAHDIVVMRLPPSDELLNAMMANSRIALQLSTREGFEVKVSEALHTGKPVIACRTGGIPLQIQHGKSGYLTTPGEKDAVAGHFYDFYTDEALYRKMSDFARTHVSNEVGTVGNAAAWLYLAVMYSRGEKIKPNGAWINDFFREETGEPYKEGETKLPRTKLDMQG.

The propeptide occupies 1–26 (MSTPHHQFESKSSTAIRRRLSSSVSS). Positions 1 to 28 (MSTPHHQFESKSSTAIRRRLSSSVSSKQ) are disordered.

It belongs to the glycosyltransferase group 1 family. Glycosyltransferase 4 subfamily. As to quaternary structure, homodimer. Expressed in mycelia, stipes and pilei.

It catalyses the reaction alpha,alpha-trehalose + phosphate = alpha-D-glucose + alpha-D-glucose 1-phosphate. Reversibly catalyzes the synthesis and degradation of trehalose from glucose and alpha-D-glucose 1-phosphate. The equilibrium lies in the direction of trehalose synthesis. The polypeptide is Trehalose phosphorylase (Pleurotus sajor-caju (Oyster mushroom)).